We begin with the raw amino-acid sequence, 313 residues long: Aspartate carbamoyltransferase catalytic subunit (313 aa).

Positions 59 and 60 each coordinate carbamoyl phosphate. K87 contributes to the L-aspartate binding site. Residues R109, H137, and Q140 each coordinate carbamoyl phosphate. L-aspartate-binding residues include R170 and R224. Residues G265 and P266 each contribute to the carbamoyl phosphate site.

This sequence belongs to the aspartate/ornithine carbamoyltransferase superfamily. ATCase family. As to quaternary structure, heterododecamer (2C3:3R2) of six catalytic PyrB chains organized as two trimers (C3), and six regulatory PyrI chains organized as three dimers (R2).

It carries out the reaction carbamoyl phosphate + L-aspartate = N-carbamoyl-L-aspartate + phosphate + H(+). It participates in pyrimidine metabolism; UMP biosynthesis via de novo pathway; (S)-dihydroorotate from bicarbonate: step 2/3. Its function is as follows. Catalyzes the condensation of carbamoyl phosphate and aspartate to form carbamoyl aspartate and inorganic phosphate, the committed step in the de novo pyrimidine nucleotide biosynthesis pathway. The protein is Aspartate carbamoyltransferase catalytic subunit of Rhizobium meliloti (strain 1021) (Ensifer meliloti).